Reading from the N-terminus, the 923-residue chain is Protein translocase subunit SecA (923 aa).

ATP contacts are provided by residues Gln-86, 104 to 108 (GEGKT), and Asp-512. Cys-906, Cys-908, Cys-917, and His-918 together coordinate Zn(2+).

The protein belongs to the SecA family. As to quaternary structure, monomer and homodimer. Part of the essential Sec protein translocation apparatus which comprises SecA, SecYEG and auxiliary proteins SecDF-YajC and YidC. Zn(2+) serves as cofactor.

It is found in the cell inner membrane. It localises to the cytoplasm. It catalyses the reaction ATP + H2O + cellular proteinSide 1 = ADP + phosphate + cellular proteinSide 2.. Functionally, part of the Sec protein translocase complex. Interacts with the SecYEG preprotein conducting channel. Has a central role in coupling the hydrolysis of ATP to the transfer of proteins into and across the cell membrane, serving both as a receptor for the preprotein-SecB complex and as an ATP-driven molecular motor driving the stepwise translocation of polypeptide chains across the membrane. This is Protein translocase subunit SecA from Caulobacter vibrioides (strain ATCC 19089 / CIP 103742 / CB 15) (Caulobacter crescentus).